A 287-amino-acid polypeptide reads, in one-letter code: ATP synthase gamma chain (287 aa).

This sequence belongs to the ATPase gamma chain family. As to quaternary structure, F-type ATPases have 2 components, CF(1) - the catalytic core - and CF(0) - the membrane proton channel. CF(1) has five subunits: alpha(3), beta(3), gamma(1), delta(1), epsilon(1). CF(0) has three main subunits: a, b and c.

It localises to the cell inner membrane. Its function is as follows. Produces ATP from ADP in the presence of a proton gradient across the membrane. The gamma chain is believed to be important in regulating ATPase activity and the flow of protons through the CF(0) complex. The polypeptide is ATP synthase gamma chain (Methylococcus capsulatus (strain ATCC 33009 / NCIMB 11132 / Bath)).